The primary structure comprises 324 residues: Anthranilate phosphoribosyltransferase (324 aa).

Residues Gly75, 78–79 (GD), Thr83, 85–88 (NVST), 102–110 (KHGNFGITG), and Ser114 each bind 5-phospho-alpha-D-ribose 1-diphosphate. Gly75 contributes to the anthranilate binding site. A Mg(2+)-binding site is contributed by Ser87. Residue Asn105 coordinates anthranilate. Residue Arg160 coordinates anthranilate. Asp216 and Glu217 together coordinate Mg(2+).

The protein belongs to the anthranilate phosphoribosyltransferase family. Homodimer. Mg(2+) is required as a cofactor.

It carries out the reaction N-(5-phospho-beta-D-ribosyl)anthranilate + diphosphate = 5-phospho-alpha-D-ribose 1-diphosphate + anthranilate. Its pathway is amino-acid biosynthesis; L-tryptophan biosynthesis; L-tryptophan from chorismate: step 2/5. Catalyzes the transfer of the phosphoribosyl group of 5-phosphorylribose-1-pyrophosphate (PRPP) to anthranilate to yield N-(5'-phosphoribosyl)-anthranilate (PRA). The chain is Anthranilate phosphoribosyltransferase from Picrophilus torridus (strain ATCC 700027 / DSM 9790 / JCM 10055 / NBRC 100828 / KAW 2/3).